Reading from the N-terminus, the 261-residue chain is Small ribosomal subunit protein mS23 (261 aa).

Residues 228-261 (EQRAAAFTGAPEIPSTEDSLGLEEGVEEKQPQQA) are disordered.

This sequence belongs to the mitochondrion-specific ribosomal protein mS23 family. In terms of assembly, component of the mitochondrial small ribosomal subunit.

It is found in the mitochondrion. This chain is Small ribosomal subunit protein mS23 (rsm25), found in Aspergillus oryzae (strain ATCC 42149 / RIB 40) (Yellow koji mold).